We begin with the raw amino-acid sequence, 133 residues long: NADH dehydrogenase [ubiquinone] 1 alpha subcomplex subunit 6 (133 aa).

The protein belongs to the complex I LYR family. In terms of assembly, complex I is composed of at least 49 different subunits.

The protein resides in the mitochondrion inner membrane. Its function is as follows. Accessory subunit of the mitochondrial membrane respiratory chain NADH dehydrogenase (Complex I), that is believed to be not involved in catalysis. Complex I functions in the transfer of electrons from NADH to the respiratory chain. The immediate electron acceptor for the enzyme is believed to be ubiquinone. The sequence is that of NADH dehydrogenase [ubiquinone] 1 alpha subcomplex subunit 6 from Arabidopsis thaliana (Mouse-ear cress).